We begin with the raw amino-acid sequence, 468 residues long: Ribulose bisphosphate carboxylase large chain (468 aa).

The residue at position 5 (lysine 5) is an N6,N6,N6-trimethyllysine. Substrate is bound by residues asparagine 114 and threonine 164. Catalysis depends on lysine 166, which acts as the Proton acceptor. Lysine 168 provides a ligand contact to substrate. The Mg(2+) site is built by lysine 192, aspartate 194, and glutamate 195. Lysine 192 bears the N6-carboxylysine mark. Histidine 285 (proton acceptor) is an active-site residue. Arginine 286, histidine 318, and serine 370 together coordinate substrate.

This sequence belongs to the RuBisCO large chain family. Type I subfamily. Heterohexadecamer of 8 large chains and 8 small chains; disulfide-linked. The disulfide link is formed within the large subunit homodimers. It depends on Mg(2+) as a cofactor. Post-translationally, the disulfide bond which can form in the large chain dimeric partners within the hexadecamer appears to be associated with oxidative stress and protein turnover.

It is found in the plastid. The protein resides in the chloroplast. It carries out the reaction 2 (2R)-3-phosphoglycerate + 2 H(+) = D-ribulose 1,5-bisphosphate + CO2 + H2O. The catalysed reaction is D-ribulose 1,5-bisphosphate + O2 = 2-phosphoglycolate + (2R)-3-phosphoglycerate + 2 H(+). Functionally, ruBisCO catalyzes two reactions: the carboxylation of D-ribulose 1,5-bisphosphate, the primary event in carbon dioxide fixation, as well as the oxidative fragmentation of the pentose substrate in the photorespiration process. Both reactions occur simultaneously and in competition at the same active site. The sequence is that of Ribulose bisphosphate carboxylase large chain from Anthospermum herbaceum.